We begin with the raw amino-acid sequence, 101 residues long: Small ubiquitin-related modifier 5 (101 aa).

Positions 17–21 (IKDED) match the Required for PML-NB formation motif. Residue Lys18 forms a Glycyl lysine isopeptide (Lys-Gly) (interchain with G-Cter in SUMO1P1/SUMO5) linkage. One can recognise a Ubiquitin-like domain in the interval 20 to 97 (EDIKLRVIGQ…IEVYQEQIGG (78 aa)). A Glycyl lysine isopeptide (Gly-Lys) (interchain with K-? in acceptor proteins) cross-link involves residue Gly97. Positions 98 to 101 (HSTV) are excised as a propeptide.

Belongs to the ubiquitin family. SUMO subfamily. Interacts with CBX4. Interacts with PIAS1. Found in a complex with SAE2. Interacts with UBE2I. Interacts with SP100. Interacts with HIPK2. Interacts with DAXX. Interacts with PML-RARA oncoprotein; PML-RARalpha outcompetes PML for SUMO1P1/SUMO5 conjugation. Cleavage of precursor form is necessary for function. Post-translationally, autosumoylated at Lys-18. In terms of tissue distribution, high expression levels in testes and peripheral blood leukocyte. Expressed also in lung, placenta, liver, spleen and thymus.

Its subcellular location is the nucleus. Its function is as follows. Ubiquitin-like protein that can be covalently attached to proteins as a monomer or as a lysine-linked polymer. Regulates the life cycle of promyelocytic leukemia nuclear bodies (PML-NBs). PolySUMO1P1/SUMO5 conjugation on 'Lys-160' of PML facilitates recruitment of PML-NB components, which enlarges PML-NB. SUMO1P1/SUMO5 also increases polySUMO2/3 conjugation of PML, resulting in RNF4-mediated disruption of PML-NBs. This Homo sapiens (Human) protein is Small ubiquitin-related modifier 5.